Reading from the N-terminus, the 257-residue chain is Tryptophan synthase alpha chain (257 aa).

Active-site proton acceptor residues include E44 and D55.

It belongs to the TrpA family. Tetramer of two alpha and two beta chains.

It catalyses the reaction (1S,2R)-1-C-(indol-3-yl)glycerol 3-phosphate + L-serine = D-glyceraldehyde 3-phosphate + L-tryptophan + H2O. It participates in amino-acid biosynthesis; L-tryptophan biosynthesis; L-tryptophan from chorismate: step 5/5. In terms of biological role, the alpha subunit is responsible for the aldol cleavage of indoleglycerol phosphate to indole and glyceraldehyde 3-phosphate. In Chlamydia caviae (strain ATCC VR-813 / DSM 19441 / 03DC25 / GPIC) (Chlamydophila caviae), this protein is Tryptophan synthase alpha chain.